The primary structure comprises 598 residues: Elongation factor 4 (598 aa).

The 183-residue stretch at 3–185 (QHIRNFSIIA…MIVAQIPPPE (183 aa)) folds into the tr-type G domain. Residues 15 to 20 (DHGKST) and 132 to 135 (NKID) each bind GTP.

Belongs to the TRAFAC class translation factor GTPase superfamily. Classic translation factor GTPase family. LepA subfamily.

It localises to the cell inner membrane. It carries out the reaction GTP + H2O = GDP + phosphate + H(+). Required for accurate and efficient protein synthesis under certain stress conditions. May act as a fidelity factor of the translation reaction, by catalyzing a one-codon backward translocation of tRNAs on improperly translocated ribosomes. Back-translocation proceeds from a post-translocation (POST) complex to a pre-translocation (PRE) complex, thus giving elongation factor G a second chance to translocate the tRNAs correctly. Binds to ribosomes in a GTP-dependent manner. The sequence is that of Elongation factor 4 from Nitrosomonas europaea (strain ATCC 19718 / CIP 103999 / KCTC 2705 / NBRC 14298).